The primary structure comprises 172 residues: GTP-dependent dephospho-CoA kinase (172 aa).

Residues Asp-40, Val-41, Val-42, Asp-59, and Glu-112 each contribute to the GTP site.

This sequence belongs to the GTP-dependent DPCK family.

The enzyme catalyses 3'-dephospho-CoA + GTP = GDP + CoA + H(+). Its pathway is cofactor biosynthesis; coenzyme A biosynthesis. Its function is as follows. Catalyzes the GTP-dependent phosphorylation of the 3'-hydroxyl group of dephosphocoenzyme A to form coenzyme A (CoA). The sequence is that of GTP-dependent dephospho-CoA kinase from Methanospirillum hungatei JF-1 (strain ATCC 27890 / DSM 864 / NBRC 100397 / JF-1).